The sequence spans 85 residues: Large ribosomal subunit protein bL27 (85 aa).

The segment at 1–21 is disordered; it reads MAHKKGVGSTRNGRDSESKRL.

This sequence belongs to the bacterial ribosomal protein bL27 family.

This chain is Large ribosomal subunit protein bL27, found in Geobacter sulfurreducens (strain ATCC 51573 / DSM 12127 / PCA).